Consider the following 576-residue polypeptide: MNISAVFNALLVSIMAAVLWKHVKLLEQFYVIEEELELTRQSQELSQVRIDYQAALQALVEDGTRMVCSGRMHTDRVCRFESLCYSTEAEEFVFFHSNSSIMLPNLGPRRFQPALLDLSSVDDHNTQYFNFIELPAAALKFMPKPVFVPDVALIMNRFNPDNLMHVFHDDLIPIFYTIQQFADLDFESRLFFMEGWNEGLHFELYKFMSNKQPLLKEQLKTLGRLLCFTKSYVGLSKITTWYQYGFVQPQGPKANILVSGNEIRHFAKFMMGKLNITKDQNAAEAYIVLFSRSMNRLIVNEAELLLALAQEFQMKTITVSLEDHSFADIVRLISNATMLVSMHGAQLITSLFLPKGAIVVELFPYGVNPEHYTPYKTLSTLPGMELQYVAWQNTEEENTIAYPNRPWEQGGIVHLDKTEQERIKKSKEVPRHLCCRNPEWLFRIYQDTKVNISSLIQVIKSKTKLGSRRQKWTQGLYPGKVRESKCQASAQGTGEAKLFVSWQIPWNLKFLKVRDVKYEVWIQEQGENSYMPYILSQQNYTFSENIKPLTTYLVWIRCIFNKTLLGPFAEVLVCNT.

Topologically, residues 1 to 4 (MNIS) are cytoplasmic. A helical; Signal-anchor for type II membrane protein membrane pass occupies residues 5–25 (AVFNALLVSIMAAVLWKHVKL). The Lumenal segment spans residues 26–576 (LEQFYVIEEE…PFAEVLVCNT (551 aa)). N-linked (GlcNAc...) asparagine glycans are attached at residues N98, N275, N335, N451, N539, and N561. The region spanning 482–576 (RESKCQASAQ…PFAEVLVCNT (95 aa)) is the Fibronectin type-III domain.

The protein belongs to the glycosyltransferase 61 family.

Its subcellular location is the endoplasmic reticulum membrane. The catalysed reaction is 3-O-(alpha-D-mannosyl)-L-threonyl-[protein] + UDP-N-acetyl-alpha-D-glucosamine = 3-O-(N-acetyl-beta-D-glucosaminyl-(1-&gt;4)-alpha-D-mannosyl)-L-threonyl-[protein] + UDP + H(+). Its pathway is protein modification; protein glycosylation. O-linked mannose beta-1,4-N-acetylglucosaminyltransferase that transfers UDP-N-acetyl-D-glucosamine to the 4-position of the mannose to generate N-acetyl-D-glucosamine-beta-1,4-O-D-mannosylprotein. Involved in the biosynthesis of the phosphorylated O-mannosyl trisaccharide (N-acetylgalactosamine-beta-3-N-acetylglucosamine-beta-4-(phosphate-6-)mannose), a carbohydrate structure present in alpha-dystroglycan (DAG1), which is required for binding laminin G-like domain-containing extracellular proteins with high affinity. The sequence is that of Protein O-linked-mannose beta-1,4-N-acetylglucosaminyltransferase 2 (pomgnt2) from Xenopus tropicalis (Western clawed frog).